The chain runs to 438 residues: Aspartate--tRNA(Asp) ligase (438 aa).

E170 is a binding site for L-aspartate. The interval 192–195 is aspartate; it reads QLYK. R214 is an L-aspartate binding site. ATP contacts are provided by residues 214-216, 222-224, and E361; these read RAE and RHL. Mg(2+) contacts are provided by E361 and S364. L-aspartate-binding residues include S364 and R368. Residue 409–412 participates in ATP binding; the sequence is GAER.

This sequence belongs to the class-II aminoacyl-tRNA synthetase family. Type 2 subfamily. In terms of assembly, homodimer. It depends on Mg(2+) as a cofactor.

It is found in the cytoplasm. It carries out the reaction tRNA(Asp) + L-aspartate + ATP = L-aspartyl-tRNA(Asp) + AMP + diphosphate. Catalyzes the attachment of L-aspartate to tRNA(Asp) in a two-step reaction: L-aspartate is first activated by ATP to form Asp-AMP and then transferred to the acceptor end of tRNA(Asp). Is specific for tRNA(Asp) since it aspartylates tRNA(Asn) 3 orders of magnitude less efficiently than tRNA(Asp). The polypeptide is Aspartate--tRNA(Asp) ligase (Thermococcus kodakarensis (strain ATCC BAA-918 / JCM 12380 / KOD1) (Pyrococcus kodakaraensis (strain KOD1))).